The sequence spans 1841 residues: Sucrase-isomaltase, intestinal (1841 aa).

At 1-12 (MAKKKFSALEIS) the chain is on the cytoplasmic side. At S7 the chain carries Phosphoserine; by PKA. The chain crosses the membrane as a helical; Signal-anchor for type II membrane protein span at residues 13–32 (LIVLFIIVTAIAIALVTVLA). At 33 to 1841 (TKVPAVEEIK…LDEPIQITWS (1809 aa)) the chain is on the lumenal side. Residues 42-81 (KSPTPTSNSTPTSTPTSTSTPTSTSTPSPGKCPPEQGEPI) form a disordered region. Residues 43–70 (SPTPTSNSTPTSTPTSTSTPTSTSTPSP) are compositionally biased toward low complexity. One can recognise a P-type 1 domain in the interval 71 to 120 (GKCPPEQGEPINERINCIPEQHPTKAICEERGCCWRPWNNTVIPWCFFAD). 3 disulfide bridges follow: C73–C104, C87–C103, and C98–C116. The N-linked (GlcNAc...) asparagine glycan is linked to N109. The segment at 120–1013 (DNHGYNAESI…ELQLNPPNAR (894 aa)) is isomaltase. The substrate site is built by D274 and D398. 2 positions are modified to sulfotyrosine: Y401 and Y410. N464 carries an N-linked (GlcNAc...) asparagine glycan. The active-site Nucleophile; for isomaltase activity is the D514. R599 provides a ligand contact to substrate. Catalysis depends on D615, which acts as the For isomaltase activity. A disulfide bridge connects residues C646 and C657. Position 673 (H673) interacts with substrate. 4 N-linked (GlcNAc...) asparagine glycosylation sites follow: N758, N765, N867, and N910. Residues 936-984 (RWCRTFSDNEKFTCYPDVGTATEGTCTQRGCLWQPVSGLSNVPPYYFPP) form the P-type 2 domain. Residues 1014 to 1841 (IKLPSNPIST…LDEPIQITWS (828 aa)) form a sucrase region. Residues N1240, N1308, N1345, N1359, and N1373 are each glycosylated (N-linked (GlcNAc...) asparagine). Residue Y1387 is modified to Sulfotyrosine. The Nucleophile; for sucrase activity role is filled by D1399. E1402 acts as the For sucrase activity in catalysis. N-linked (GlcNAc...) asparagine glycosylation occurs at N1485. The active-site Proton donor; for sucrase activity is the D1512. Residues N1513, N1575, N1762, and N1829 are each glycosylated (N-linked (GlcNAc...) asparagine).

It belongs to the glycosyl hydrolase 31 family. As to quaternary structure, the resulting sucrase and isomaltase subunits stay associated with one another in a complex by non-covalent linkages. The precursor is proteolytically cleaved when exposed to pancreatic proteases in the intestinal lumen. Post-translationally, sulfated.

It is found in the apical cell membrane. It carries out the reaction Hydrolysis of sucrose and maltose by an alpha-D-glucosidase-type action.. It catalyses the reaction Hydrolysis of (1-&gt;6)-alpha-D-glucosidic linkages in some oligosaccharides produced from starch and glycogen by alpha-amylase, and in isomaltose.. Functionally, plays an important role in the final stage of carbohydrate digestion. Isomaltase activity is specific for both alpha-1,4- and alpha-1,6-oligosaccharides. The polypeptide is Sucrase-isomaltase, intestinal (Si) (Rattus norvegicus (Rat)).